We begin with the raw amino-acid sequence, 825 residues long: Fibrous sheath CABYR-binding protein (825 aa).

2 disordered regions span residues 1–43 (MVGK…SYSA) and 113–139 (QDVE…RTGY). The segment covering 21 to 40 (KSSSPKATHRIGNTSGSKGS) has biased composition (polar residues). S160 is subject to Phosphoserine. 3 disordered regions span residues 168-232 (SRPD…LLED), 244-718 (QEGS…DKHS), and 732-751 (GEAS…EDEA). Residues 200-220 (PATNSNEEIGQKNISRTSFTQ) are compositionally biased toward polar residues. Basic and acidic residues predominate over residues 277 to 290 (ATAKAEPRPAEETH). 2 stretches are compositionally biased toward low complexity: residues 348-357 (AEILPPSAEE) and 398-407 (PLPAEGALEE). The segment covering 610–676 (VQPPPAEEAP…PAEVQPPPAE (67 aa)) has biased composition (pro residues).

As to quaternary structure, interacts with CABYR. Interacts with ROPN1 and ROPN1L; the interaction increases upon spermatozoa capacitation conditions. Post-translationally, phosphorylated by PKA upon spermatozoa capacitation conditions.

The protein localises to the cell projection. The protein resides in the cilium. It localises to the flagellum. In terms of biological role, may be involved in the later stages of fibrous sheath biogenesis and spermatozoa capacitation. Inhibits ROPN1 and ROPN1L SUMOylation. Binds calcium. This Homo sapiens (Human) protein is Fibrous sheath CABYR-binding protein (FSCB).